Reading from the N-terminus, the 391-residue chain is Elongation factor Tu (391 aa).

Residues K10 to A201 enclose the tr-type G domain. The segment at G19 to T26 is G1. G19 to T26 is a binding site for GTP. T26 contributes to the Mg(2+) binding site. The segment at G55–S59 is G2. Positions D76 to G79 are G3. GTP is bound by residues D76 to H80 and N131 to D134. The interval N131 to D134 is G4. A G5 region spans residues S169–L171.

The protein belongs to the TRAFAC class translation factor GTPase superfamily. Classic translation factor GTPase family. EF-Tu/EF-1A subfamily. As to quaternary structure, monomer.

It is found in the cytoplasm. The enzyme catalyses GTP + H2O = GDP + phosphate + H(+). Its function is as follows. GTP hydrolase that promotes the GTP-dependent binding of aminoacyl-tRNA to the A-site of ribosomes during protein biosynthesis. This chain is Elongation factor Tu, found in Jannaschia sp. (strain CCS1).